A 210-amino-acid polypeptide reads, in one-letter code: Outer-membrane lipoprotein LolB (210 aa).

An N-terminal signal peptide occupies residues 1–18 (MKKFTKILSLSTLLFLAG). C19 carries the N-palmitoyl cysteine lipid modification. C19 is lipidated: S-diacylglycerol cysteine.

This sequence belongs to the LolB family. As to quaternary structure, monomer.

Its subcellular location is the cell outer membrane. Its function is as follows. Plays a critical role in the incorporation of lipoproteins in the outer membrane after they are released by the LolA protein. This chain is Outer-membrane lipoprotein LolB, found in Actinobacillus pleuropneumoniae serotype 5b (strain L20).